A 242-amino-acid polypeptide reads, in one-letter code: Ribose-5-phosphate isomerase A (242 aa).

Residues 39–42 (SGST), 95–98 (DGAD), and 108–111 (KGGG) contribute to the substrate site. The active-site Proton acceptor is the Glu117. Residue Lys135 coordinates substrate.

It belongs to the ribose 5-phosphate isomerase family. In terms of assembly, homodimer.

The enzyme catalyses aldehydo-D-ribose 5-phosphate = D-ribulose 5-phosphate. It functions in the pathway carbohydrate degradation; pentose phosphate pathway; D-ribose 5-phosphate from D-ribulose 5-phosphate (non-oxidative stage): step 1/1. Its function is as follows. Catalyzes the reversible conversion of ribose-5-phosphate to ribulose 5-phosphate. This Chlamydia trachomatis serovar D (strain ATCC VR-885 / DSM 19411 / UW-3/Cx) protein is Ribose-5-phosphate isomerase A.